A 347-amino-acid polypeptide reads, in one-letter code: Phosphoribosylformylglycinamidine cyclo-ligase (347 aa).

This sequence belongs to the AIR synthase family.

Its subcellular location is the cytoplasm. It catalyses the reaction 2-formamido-N(1)-(5-O-phospho-beta-D-ribosyl)acetamidine + ATP = 5-amino-1-(5-phospho-beta-D-ribosyl)imidazole + ADP + phosphate + H(+). It participates in purine metabolism; IMP biosynthesis via de novo pathway; 5-amino-1-(5-phospho-D-ribosyl)imidazole from N(2)-formyl-N(1)-(5-phospho-D-ribosyl)glycinamide: step 2/2. The protein is Phosphoribosylformylglycinamidine cyclo-ligase of Yersinia pseudotuberculosis serotype IB (strain PB1/+).